Consider the following 505-residue polypeptide: 2,3-bisphosphoglycerate-independent phosphoglycerate mutase (505 aa).

Mn(2+) is bound by residues Asp15 and Ser65. Ser65 functions as the Phosphoserine intermediate in the catalytic mechanism. Substrate-binding positions include His126, 156-157 (RD), Arg187, Arg193, 260-263 (RPDR), and Lys333. 5 residues coordinate Mn(2+): Asp398, His402, Asp439, His440, and His457.

Belongs to the BPG-independent phosphoglycerate mutase family. In terms of assembly, monomer. Mn(2+) serves as cofactor.

The enzyme catalyses (2R)-2-phosphoglycerate = (2R)-3-phosphoglycerate. The protein operates within carbohydrate degradation; glycolysis; pyruvate from D-glyceraldehyde 3-phosphate: step 3/5. In terms of biological role, catalyzes the interconversion of 2-phosphoglycerate and 3-phosphoglycerate. This Mycoplasmopsis pulmonis (strain UAB CTIP) (Mycoplasma pulmonis) protein is 2,3-bisphosphoglycerate-independent phosphoglycerate mutase.